The chain runs to 288 residues: Light-independent protochlorophyllide reductase iron-sulfur ATP-binding protein (288 aa).

Residues 10–15 (GIGKST) and Lys39 each bind ATP. Ser14 is a binding site for Mg(2+). [4Fe-4S] cluster is bound by residues Cys95 and Cys129. 180–181 (NR) lines the ATP pocket.

The protein belongs to the NifH/BchL/ChlL family. As to quaternary structure, homodimer. Protochlorophyllide reductase is composed of three subunits; ChlL, ChlN and ChlB. Requires [4Fe-4S] cluster as cofactor.

The catalysed reaction is chlorophyllide a + oxidized 2[4Fe-4S]-[ferredoxin] + 2 ADP + 2 phosphate = protochlorophyllide a + reduced 2[4Fe-4S]-[ferredoxin] + 2 ATP + 2 H2O. Its pathway is porphyrin-containing compound metabolism; chlorophyll biosynthesis (light-independent). Component of the dark-operative protochlorophyllide reductase (DPOR) that uses Mg-ATP and reduced ferredoxin to reduce ring D of protochlorophyllide (Pchlide) to form chlorophyllide a (Chlide). This reaction is light-independent. The L component serves as a unique electron donor to the NB-component of the complex, and binds Mg-ATP. The sequence is that of Light-independent protochlorophyllide reductase iron-sulfur ATP-binding protein from Nostoc sp. (strain PCC 7120 / SAG 25.82 / UTEX 2576).